The primary structure comprises 465 residues: ATP synthase subunit beta (465 aa).

148 to 155 (GGAGVGKT) lines the ATP pocket.

Belongs to the ATPase alpha/beta chains family. In terms of assembly, F-type ATPases have 2 components, CF(1) - the catalytic core - and CF(0) - the membrane proton channel. CF(1) has five subunits: alpha(3), beta(3), gamma(1), delta(1), epsilon(1). CF(0) has three main subunits: a(1), b(2) and c(9-12). The alpha and beta chains form an alternating ring which encloses part of the gamma chain. CF(1) is attached to CF(0) by a central stalk formed by the gamma and epsilon chains, while a peripheral stalk is formed by the delta and b chains.

The protein resides in the cell inner membrane. It catalyses the reaction ATP + H2O + 4 H(+)(in) = ADP + phosphate + 5 H(+)(out). Produces ATP from ADP in the presence of a proton gradient across the membrane. The catalytic sites are hosted primarily by the beta subunits. This Neisseria meningitidis serogroup B (strain ATCC BAA-335 / MC58) protein is ATP synthase subunit beta.